A 1199-amino-acid chain; its full sequence is Ecdysone-induced protein 75B, isoforms C/D (1199 aa).

The tract at residues Thr130 to Val182 is disordered. Composition is skewed to low complexity over residues Gln139–Gln149 and Glu162–His172. A DNA-binding region (nuclear receptor) is located at residues Thr242 to Phe318. NR C4-type zinc fingers lie at residues Cys245–Cys265 and Cys282–Cys306. Residues Asp352–Asn600 enclose the NR LBD domain. 6 disordered regions span residues Lys624–Ala665, Leu771–Asp808, Val831–Ile851, Ala895–Ser961, Glu991–Ala1104, and Val1155–Leu1188. 5 stretches are compositionally biased toward low complexity: residues Gly641 to Leu653, Ser792 to Ser804, Val831 to Ser845, Ala897 to Gln942, and Ser950 to Ser961. Polar residues-rich tracts occupy residues Ser993 to Arg1006 and Ala1018 to Gln1040. Low complexity-rich tracts occupy residues Ser1041–Ser1077, Ser1086–Ala1104, and Ala1159–Gly1187.

This sequence belongs to the nuclear hormone receptor family. NR1 subfamily.

It localises to the nucleus. Functionally, implicated in the regulation of ecdysone-triggered gene hierarchies. Probably plays a key role in mediating the regulation of the larval molt by 20-OH-ecdysone. This chain is Ecdysone-induced protein 75B, isoforms C/D (Eip75B), found in Drosophila melanogaster (Fruit fly).